Reading from the N-terminus, the 251-residue chain is Imidazole glycerol phosphate synthase subunit HisF (251 aa).

Catalysis depends on residues D11 and D130.

The protein belongs to the HisA/HisF family. As to quaternary structure, heterodimer of HisH and HisF.

Its subcellular location is the cytoplasm. The catalysed reaction is 5-[(5-phospho-1-deoxy-D-ribulos-1-ylimino)methylamino]-1-(5-phospho-beta-D-ribosyl)imidazole-4-carboxamide + L-glutamine = D-erythro-1-(imidazol-4-yl)glycerol 3-phosphate + 5-amino-1-(5-phospho-beta-D-ribosyl)imidazole-4-carboxamide + L-glutamate + H(+). It functions in the pathway amino-acid biosynthesis; L-histidine biosynthesis; L-histidine from 5-phospho-alpha-D-ribose 1-diphosphate: step 5/9. In terms of biological role, IGPS catalyzes the conversion of PRFAR and glutamine to IGP, AICAR and glutamate. The HisF subunit catalyzes the cyclization activity that produces IGP and AICAR from PRFAR using the ammonia provided by the HisH subunit. The sequence is that of Imidazole glycerol phosphate synthase subunit HisF from Listeria monocytogenes serotype 4b (strain CLIP80459).